We begin with the raw amino-acid sequence, 210 residues long: Thymidylate kinase (210 aa).

10 to 17 contributes to the ATP binding site; it reads GGEGAGKS.

This sequence belongs to the thymidylate kinase family.

It catalyses the reaction dTMP + ATP = dTDP + ADP. Phosphorylation of dTMP to form dTDP in both de novo and salvage pathways of dTTP synthesis. The protein is Thymidylate kinase of Magnetococcus marinus (strain ATCC BAA-1437 / JCM 17883 / MC-1).